The sequence spans 426 residues: Potassium channel subfamily K member 2 (426 aa).

Over 1–61 the chain is Cytoplasmic; sequence MLASASRERP…SAINVMKWKT (61 aa). Important for GNG4 binding and L-glutamate release in astrocytes stretches follow at residues 17–38 and 51–61; these read AAPDLLDPKSAAQNSKPRLSFS and DSAINVMKWKT. Residues 62-82 form a helical membrane-spanning segment; that stretch reads VSTIFLVVVLYLIIGATVFKA. 2 N-linked (GlcNAc...) asparagine glycosylation sites follow: N110 and N134. Positions 144-170 form an intramembrane region, pore-forming; the sequence is LGSSFFFAGTVITTIGFGNISPRTEGG. K(+) is bound by residues T157, I158, G159, and F160. Residues 157-162 are selectivity filter 1; the sequence is TIGFGN. The helical transmembrane segment at 172–192 threads the bilayer; the sequence is IFCIIYALLGIPLFGFLLAGV. At 193 to 222 the chain is on the cytoplasmic side; sequence GDQLGTIFGKGIAKVEDTFIKWNVSQTKIR. A helical transmembrane segment spans residues 223-243; the sequence is IISTIIFILFGCVLFVALPAV. An intramembrane region (pore-forming) is located at residues 253–283; the sequence is ALDAIYFVVITLTTIGFGDYVAGGSDIEYLD. 4 residues coordinate K(+): T266, I267, G268, and F269. A selectivity filter 2 region spans residues 266-271; the sequence is TIGFGD. The chain crosses the membrane as a helical span at residues 288 to 308; the sequence is VVWFWILVGLAYFAAVLSMIG. Residues 309-426 are Cytoplasmic-facing; the sequence is DWLRVISKKT…EDIAVIENMK (118 aa). The segment at 313–326 is interaction with AKAP5; it reads VISKKTKEEVGEFR. Positions 337-385 are essential for chloroform and halothane sensitivity; it reads TAEFKETRRRLSVEIYDKFQRATSVKRKLSAELAGNHNQELTPCRRTLS. S348 is subject to Phosphoserine; by PKA.

The protein belongs to the two pore domain potassium channel (TC 1.A.1.8) family. As to quaternary structure, homodimer; disulfide-linked. Forms heterodimers with other 2-pore domain K(+) channel subunits, such as KCNK1, KCNK4, KCNK10 and KCNK18. Interacts with AKAP5; the channel is recruited to postsynaptic microdomains by AKAP5 where it can integrate neurotransmitter receptor signals. Part of a complex composed of AKAP5 and ADRB2. Upon AKAP5 binding, the channel is no longer sensitive to intracellular acidification, membrane stretch or arachidonic acid stimuli. Interacts with POPDC1; the interaction enhances KCNK2 surface expression and is inhibited by cAMP. Interacts (via N-terminus) with G-protein subunit GNG4 (via C-terminus); this interaction confers ion selectivity to L-glutamate and Cl(-) anions. Post-translationally, phosphorylation at Ser-348 controls the reversible conversion from a leak channel to a voltage-dependent channel. In terms of tissue distribution, expressed in cardiomyocytes (at protein level). Expressed in various brain regions including the lateral olfactory tract, piriform cortex of the forebrain, paraventricular and anteromedial thalamic nuclei, brainstem, caudate putamen, nucleus accumbens, neocortex and interpeduncular nucleus. Detected in astrocytes in hippocampus stratum radiatum. As to expression, expressed in brain and kidney.

Its subcellular location is the cell membrane. The protein resides in the endoplasmic reticulum membrane. It localises to the cell projection. The protein localises to the axon. It is found in the dendrite. Its subcellular location is the postsynaptic density membrane. The protein resides in the sarcolemma. It catalyses the reaction K(+)(in) = K(+)(out). The catalysed reaction is L-glutamate(out) = L-glutamate(in). It carries out the reaction chloride(in) = chloride(out). The enzyme catalyses Rb(+)(in) = Rb(+)(out). It catalyses the reaction Cs(+)(in) = Cs(+)(out). Its activity is regulated as follows. Activated by various stimuli including intracellular acidic pH, mechanical stretch and polyunsaturated fatty acids such as arachidonic acid. K(+) channel that conducts voltage-dependent outward rectifying currents upon membrane depolarization. Voltage sensing is coupled to K(+) electrochemical gradient in an 'ion flux gating' mode where outward but not inward ion flow opens the gate. Converts to voltage-independent 'leak' conductance mode upon stimulation by various stimuli including mechanical membrane stretch, acidic pH, heat and lipids. Reversibly converts between a voltage-insensitive K(+) 'leak' channel and a voltage-dependent outward rectifying K(+) channel in a phosphorylation-dependent manner. Homo- and heterodimerizes to form functional channels with distinct regulatory and gating properties. In trigeminal ganglia sensory neurons, the heterodimer of KCNK2/TREK-1 and KCNK18/TRESK inhibits neuronal firing and neurogenic inflammation by stabilizing the resting membrane potential at K(+) equilibrium potential as well as by regulating the threshold of action potentials and the spike frequency. At trigeminal A-beta afferent nerves, the heterodimer of KCNK2/TREK-1 and KCNK4/TRAAK is mostly coexpressed at nodes of Ranvier where it conducts voltage-independent mechanosensitive and thermosensitive currents, allowing rapid action potential repolarization, high speed and high frequence saltatory conduction on myelinated nerves to ensure prompt sensory responses. In hippocampal astrocytes, the heterodimer of KCNK2/TREK-1 and KCNK1/TWIK-1 allows passive K(+) conductance under basal conditions, but changes ion selectivity and becomes permeable to L-glutamate and Cl(-) ions upon binding to G-protein subunit GNG4 in stimulated astrocytes. Mediates rapid L-glutamate release in response to activation of G-protein-coupled receptors such as F2R and CNR1. In hippocampal pyramidal neurons, the homodimer of KCNK2/TREK-1 contributes to gamma-aminobutyric acid (GABA) B-induced slow inhibitory postsynaptic potential. Associates with AKAP5 and Gs-protein-coupled receptor B2AR at postsynaptic dense bodies and converts to a leak channel no longer sensitive to stimulation by arachidonic acid, acidic pH or mechanical stress, nor inhibited by Gq-coupled receptors but still under the negative control of Gs-coupled receptors. Permeable to other monovalent cations such as Rb(+) and Cs(+). Its function is as follows. Does not display channel activity but reduces the channel activity of isoform 1, isoform 2 and isoform 4 and reduces cell surface expression of isoform 2. The sequence is that of Potassium channel subfamily K member 2 from Rattus norvegicus (Rat).